The sequence spans 203 residues: dITP/XTP pyrophosphatase (203 aa).

A substrate-binding site is contributed by 16–21 (SHNRGK). Mg(2+) is bound by residues glutamate 48 and aspartate 77. The active-site Proton acceptor is the aspartate 77. Substrate is bound by residues serine 78, 161–164 (FGYD), lysine 184, and 189–190 (HR).

The protein belongs to the HAM1 NTPase family. As to quaternary structure, homodimer. Requires Mg(2+) as cofactor.

The enzyme catalyses XTP + H2O = XMP + diphosphate + H(+). It catalyses the reaction dITP + H2O = dIMP + diphosphate + H(+). The catalysed reaction is ITP + H2O = IMP + diphosphate + H(+). Functionally, pyrophosphatase that catalyzes the hydrolysis of nucleoside triphosphates to their monophosphate derivatives, with a high preference for the non-canonical purine nucleotides XTP (xanthosine triphosphate), dITP (deoxyinosine triphosphate) and ITP. Seems to function as a house-cleaning enzyme that removes non-canonical purine nucleotides from the nucleotide pool, thus preventing their incorporation into DNA/RNA and avoiding chromosomal lesions. In Rhodospirillum centenum (strain ATCC 51521 / SW), this protein is dITP/XTP pyrophosphatase.